The sequence spans 408 residues: MSRDVKKVVLAYSGGLDTSVILKWLQTTYRCEVVTFTADLGQGEELEPARKKAELLGIKPENIFIEDVREEFVRDYVFPMFRANAVYEGQYLLGTSIARPLIAKKQIEIARKVGADAVSHGATGKGNDQVRFELGYYALEPEITVIAPWREWDLTSRTKLLEFAETHQIPIAKDKRGEAPFSVDANLLHSSSEGKVLEDPAEDAPEYVYQRTISPEAAPDVATVITIGFEKGDAVSINGEALSPATLLAKLNELGKANGIGRLDLVENRFVGMKSRGVYETPGGTILLAAHRGIESITLDRGAAHLKDELMPRYAELIYNGFWFSPEREMLQAAIDHSQAYVTGEVTVKLYKGNATVIGRKSPYSLYNQELVTFEEGAVAYDHRDAAGFIKLNALRLRTTAARARKAQ.

ATP contacts are provided by residues 11–19 (AYSGGLDTS) and alanine 38. L-citrulline is bound by residues tyrosine 91 and serine 96. Glycine 121 contacts ATP. 3 residues coordinate L-aspartate: threonine 123, asparagine 127, and aspartate 128. Asparagine 127 provides a ligand contact to L-citrulline. L-citrulline-binding residues include arginine 131, serine 182, serine 191, glutamate 267, and tyrosine 279.

It belongs to the argininosuccinate synthase family. Type 1 subfamily. In terms of assembly, homotetramer.

Its subcellular location is the cytoplasm. It catalyses the reaction L-citrulline + L-aspartate + ATP = 2-(N(omega)-L-arginino)succinate + AMP + diphosphate + H(+). Its pathway is amino-acid biosynthesis; L-arginine biosynthesis; L-arginine from L-ornithine and carbamoyl phosphate: step 2/3. The protein is Argininosuccinate synthase of Azorhizobium caulinodans (strain ATCC 43989 / DSM 5975 / JCM 20966 / LMG 6465 / NBRC 14845 / NCIMB 13405 / ORS 571).